The chain runs to 253 residues: Chloride intracellular channel protein 4 (253 aa).

Position 2 is an N-acetylalanine (A2). The interval 2-101 is required for insertion into the membrane; it reads ALSMPLNGLK…EEFLEEVLCP (100 aa). A Phosphoserine modification is found at S4. The residue at position 24 (K24) is an N6-acetyllysine. A G-site motif is present at residues 35-38; the sequence is CPFS. A helical transmembrane segment spans residues 37–57; it reads FSQRLFMILWLKGVVFSVTTV. Residues 81–244 enclose the GST C-terminal domain; it reads NSEVKTDVNK…PSDKEVEIAY (164 aa). Residue K130 is modified to N6-acetyllysine. Phosphoserine occurs at positions 132, 167, and 236. Y244 is subject to Phosphotyrosine.

This sequence belongs to the chloride channel CLIC family. As to quaternary structure, component of a multimeric complex consisting of several cytoskeletal proteins, including actin, ezrin, alpha-actinin, gelsolin, IQGAP1 and CLIC5A. Binds directly to brain dynamin I in a complex containing actin, tubulin and 14-3-3 isoforms. Monomer. Interacts with HRH3. Interacts with AKAP9. In terms of tissue distribution, detected in epithelial cells from colon, esophagus and kidney (at protein level). Expression is prominent in heart, kidney, placenta and skeletal muscle.

Its subcellular location is the cytoplasm. The protein resides in the cytoskeleton. It localises to the microtubule organizing center. The protein localises to the centrosome. It is found in the cytoplasmic vesicle membrane. Its subcellular location is the nucleus. The protein resides in the cell membrane. It localises to the mitochondrion. The protein localises to the cell junction. It is found in the endoplasmic reticulum membrane. The catalysed reaction is chloride(in) = chloride(out). The enzyme catalyses thiocyanate(in) = thiocyanate(out). It catalyses the reaction nitrate(in) = nitrate(out). It carries out the reaction iodide(out) = iodide(in). The catalysed reaction is bromide(in) = bromide(out). The enzyme catalyses fluoride(in) = fluoride(out). It catalyses the reaction choline(out) = choline(in). With respect to regulation, inhibited by rapamycin, amphotericin B and IAA-94. In the soluble state, catalyzes glutaredoxin-like thiol disulfide exchange reactions with reduced glutathione as electron donor. Can insert into membranes and form voltage-dependent multi-ion conductive channels. Membrane insertion seems to be redox-regulated and may occur only under oxidizing conditions. Has alternate cellular functions like a potential role in angiogenesis or in maintaining apical-basolateral membrane polarity during mitosis and cytokinesis. Could also promote endothelial cell proliferation and regulate endothelial morphogenesis (tubulogenesis). Promotes cell-surface expression of HRH3. The chain is Chloride intracellular channel protein 4 from Homo sapiens (Human).